A 236-amino-acid polypeptide reads, in one-letter code: Small ribosomal subunit protein uS2c (236 aa).

The protein belongs to the universal ribosomal protein uS2 family.

The protein resides in the plastid. Its subcellular location is the chloroplast. In Chloranthus spicatus (Chulantree), this protein is Small ribosomal subunit protein uS2c (rps2).